The chain runs to 201 residues: 3-isopropylmalate dehydratase small subunit (201 aa).

This sequence belongs to the LeuD family. LeuD type 1 subfamily. As to quaternary structure, heterodimer of LeuC and LeuD.

The enzyme catalyses (2R,3S)-3-isopropylmalate = (2S)-2-isopropylmalate. Its pathway is amino-acid biosynthesis; L-leucine biosynthesis; L-leucine from 3-methyl-2-oxobutanoate: step 2/4. Catalyzes the isomerization between 2-isopropylmalate and 3-isopropylmalate, via the formation of 2-isopropylmaleate. The sequence is that of 3-isopropylmalate dehydratase small subunit from Shewanella baltica (strain OS155 / ATCC BAA-1091).